A 251-amino-acid polypeptide reads, in one-letter code: Ribosomal RNA small subunit methyltransferase J (251 aa).

S-adenosyl-L-methionine-binding positions include 100-101, 116-117, and aspartate 170; these read RD and ER.

This sequence belongs to the methyltransferase superfamily. RsmJ family.

Its subcellular location is the cytoplasm. The enzyme catalyses guanosine(1516) in 16S rRNA + S-adenosyl-L-methionine = N(2)-methylguanosine(1516) in 16S rRNA + S-adenosyl-L-homocysteine + H(+). In terms of biological role, specifically methylates the guanosine in position 1516 of 16S rRNA. This chain is Ribosomal RNA small subunit methyltransferase J, found in Actinobacillus pleuropneumoniae serotype 3 (strain JL03).